Consider the following 449-residue polypeptide: Tubulin alpha-1 chain (449 aa).

Residues Gln-11, Glu-71, Ser-140, Gly-144, Thr-145, Thr-179, Asn-206, and Asn-228 each coordinate GTP. Glu-71 contributes to the Mg(2+) binding site. The active site involves Glu-254.

It belongs to the tubulin family. In terms of assembly, dimer of alpha and beta chains. A typical microtubule is a hollow water-filled tube with an outer diameter of 25 nm and an inner diameter of 15 nM. Alpha-beta heterodimers associate head-to-tail to form protofilaments running lengthwise along the microtubule wall with the beta-tubulin subunit facing the microtubule plus end conferring a structural polarity. Microtubules usually have 13 protofilaments but different protofilament numbers can be found in some organisms and specialized cells. Mg(2+) is required as a cofactor.

It is found in the cytoplasm. Its subcellular location is the cytoskeleton. The enzyme catalyses GTP + H2O = GDP + phosphate + H(+). Tubulin is the major constituent of microtubules, a cylinder consisting of laterally associated linear protofilaments composed of alpha- and beta-tubulin heterodimers. Microtubules grow by the addition of GTP-tubulin dimers to the microtubule end, where a stabilizing cap forms. Below the cap, tubulin dimers are in GDP-bound state, owing to GTPase activity of alpha-tubulin. The protein is Tubulin alpha-1 chain (tubA) of Emericella nidulans (strain FGSC A4 / ATCC 38163 / CBS 112.46 / NRRL 194 / M139) (Aspergillus nidulans).